Reading from the N-terminus, the 194-residue chain is Thioredoxin O1, mitochondrial (194 aa).

A mitochondrion-targeting transit peptide spans methionine 1–isoleucine 42. Serine 75 carries the post-translational modification Phosphoserine. Positions valine 89–lysine 194 constitute a Thioredoxin domain. Active-site nucleophile residues include cysteine 118 and cysteine 121. Cysteine 118 and cysteine 121 form a disulfide bridge.

The protein belongs to the thioredoxin family. Plant O-type subfamily.

The protein resides in the mitochondrion matrix. Its function is as follows. Thiol-disulfide oxidoreductase that may participate in various redox reactions. Possesses insulin disulfide bonds reducing activity. Reduced by thioredoxin reductases NTRA and NTRB. The protein is Thioredoxin O1, mitochondrial of Arabidopsis thaliana (Mouse-ear cress).